Reading from the N-terminus, the 178-residue chain is Ribosome maturation factor RimP (178 aa).

Belongs to the RimP family.

The protein resides in the cytoplasm. Required for maturation of 30S ribosomal subunits. This chain is Ribosome maturation factor RimP, found in Maricaulis maris (strain MCS10) (Caulobacter maris).